Reading from the N-terminus, the 223-residue chain is Regulator of G-protein signaling 19 (223 aa).

The tract at residues 1–30 (MPTPPEAEKQQTGPEEADQPPSMSSHDAAP) is disordered. Positions 20–29 (PPSMSSHDAA) are enriched in low complexity. 2 positions are modified to phosphoserine: S24 and S103. Residues 96–212 (SFDKLMHSPA…LSSPAYRALL (117 aa)) enclose the RGS domain. S157 is modified (phosphoserine; by MAPK1 and MAPK3). The segment at 213-223 (LQGASQSSSEA) is interaction with GIPC.

Interacts with GIPC PDZ domain. Interacts with GNAO1. Post-translationally, fatty acylated. Heavily palmitoylated in the cysteine string motif. In terms of processing, phosphorylated, mainly on serine residues.

It is found in the membrane. Functionally, inhibits signal transduction by increasing the GTPase activity of G protein alpha subunits thereby driving them into their inactive GDP-bound form. Binds to G-alpha subfamily 1 members, with the order G(i)a3 &gt; G(i)a1 &gt; G(o)a &gt;&gt; G(z)a/G(i)a2. Activity on G(z)-alpha is inhibited by phosphorylation and palmitoylation of the G-protein. This chain is Regulator of G-protein signaling 19 (RGS19), found in Bos taurus (Bovine).